Consider the following 175-residue polypeptide: Small ribosomal subunit protein uS9 (175 aa).

It belongs to the universal ribosomal protein uS9 family.

The sequence is that of Small ribosomal subunit protein uS9 from Streptomyces griseus subsp. griseus (strain JCM 4626 / CBS 651.72 / NBRC 13350 / KCC S-0626 / ISP 5235).